A 178-amino-acid polypeptide reads, in one-letter code: uncharacterized protein (178 aa).

This sequence belongs to the mimivirus L39/R874 family.

This is an uncharacterized protein from Acanthamoeba polyphaga (Amoeba).